Reading from the N-terminus, the 281-residue chain is Nucleoid occlusion protein (281 aa).

Residues 1 to 24 (MKHPFSRLFSFGEKEQEEMEEKQE) form a disordered region. Positions 145–164 (EALAQRLGKGQSTIANKLRL) form a DNA-binding region, H-T-H motif.

The protein belongs to the ParB family.

It is found in the cytoplasm. Its subcellular location is the nucleoid. Effects nucleoid occlusion by binding relatively nonspecifically to DNA and preventing the assembly of the division machinery in the vicinity of the nucleoid, especially under conditions that disturb the cell cycle. It helps to coordinate cell division and chromosome segregation by preventing the formation of the Z ring through the nucleoid, which would cause chromosome breakage. This Geobacillus kaustophilus (strain HTA426) protein is Nucleoid occlusion protein.